A 633-amino-acid polypeptide reads, in one-letter code: Probable potassium transport system protein Kup 2 (633 aa).

Transmembrane regions (helical) follow at residues 18–38 (FVGLVVGAIGVVYGDIGTSPL), 61–81 (LISLMIWTLTIIVTFKYVLFL), 107–127 (VPVLFFAGLIGSALFIGDAMI), 143–163 (ITPAFAEYVPPLSAAIMIVLF), 176–196 (FFGPITVLWFFAMAAGGVIHI), 211–231 (ALSFLAHAGTVGLIVLGAVFL), 255–275 (WFVLVFPALLLNYLGQGALVL), 293–313 (ALLPVVLLATLATIIASQAVI), 345–365 (IYVPSVNLLLLTGVLMLIFSF), 371–391 (LATAYGISVTGAMVITTMLAF), 402–422 (FMLASAALLPLFVIEVVFLAA), and 429–449 (DGGWVPVALALAIMTLMWTWT).

This sequence belongs to the HAK/KUP transporter (TC 2.A.72) family.

It localises to the cell inner membrane. The catalysed reaction is K(+)(in) + H(+)(in) = K(+)(out) + H(+)(out). Transport of potassium into the cell. Likely operates as a K(+):H(+) symporter. In Rhizobium etli (strain ATCC 51251 / DSM 11541 / JCM 21823 / NBRC 15573 / CFN 42), this protein is Probable potassium transport system protein Kup 2.